Reading from the N-terminus, the 333-residue chain is Foldase protein PrsA (333 aa).

The first 22 residues, 1–22, serve as a signal peptide directing secretion; sequence MKKSTKLLAGIVTLASAMTLAA. C23 carries the N-palmitoyl cysteine lipid modification. A lipid anchor (S-diacylglycerol cysteine) is attached at C23. Residues 145-240 enclose the PpiC domain; sequence TPEMTTQVIT…NKFYIVKVTK (96 aa). Residues 301 to 333 are disordered; the sequence is DKKASKANTSKSDQKTSSDSSKDSQSSKSKSEK. Over residues 312–322 the composition is skewed to basic and acidic residues; the sequence is SDQKTSSDSSK. Over residues 323 to 333 the composition is skewed to low complexity; the sequence is DSQSSKSKSEK.

Belongs to the PrsA family.

The protein localises to the cell membrane. The catalysed reaction is [protein]-peptidylproline (omega=180) = [protein]-peptidylproline (omega=0). In terms of biological role, plays a major role in protein secretion by helping the post-translocational extracellular folding of several secreted proteins. The polypeptide is Foldase protein PrsA (Streptococcus equi subsp. zooepidemicus (strain MGCS10565)).